We begin with the raw amino-acid sequence, 500 residues long: Probable serine carboxypeptidase CPVL (500 aa).

Residues 1–23 (MKVSLSFLLTILIVIITIKVNLS) form the signal peptide. Residues N110 and N161 are each glycosylated (N-linked (GlcNAc...) asparagine). The active site involves S233. N333 and N360 each carry an N-linked (GlcNAc...) asparagine glycan. Residues D414 and H474 contribute to the active site.

Belongs to the peptidase S10 family.

The protein resides in the secreted. Functionally, may be involved in the digestion of phagocytosed particles in the lysosome, participation in an inflammatory protease cascade, and trimming of peptides for antigen presentation. This chain is Probable serine carboxypeptidase CPVL (cpvl), found in Dictyostelium discoideum (Social amoeba).